Reading from the N-terminus, the 478-residue chain is Serine/threonine-protein phosphatase 2A activator 1 (478 aa).

A disordered region spans residues 359–478; that stretch reads DPSAIPPPSR…DITTKAPWAK (120 aa). A compositionally biased stretch (low complexity) spans 396 to 419; that stretch reads APWATASQSTPPPSTGTAAPWATS.

This sequence belongs to the PTPA-type PPIase family.

The protein localises to the cytoplasm. Its subcellular location is the nucleus. It carries out the reaction [protein]-peptidylproline (omega=180) = [protein]-peptidylproline (omega=0). PPIases accelerate the folding of proteins. It catalyzes the cis-trans isomerization of proline imidic peptide bonds in oligopeptides. Acts as a regulatory subunit for PP2A-like phosphatases modulating their activity or substrate specificity, probably by inducing a conformational change in the catalytic subunit, a direct target of the PPIase. Can reactivate inactive phosphatase PP2A-phosphatase methylesterase complexes (PP2Ai) in presence of ATP and Mg(2+) by dissociating the inactive form from the complex. This Aspergillus oryzae (strain ATCC 42149 / RIB 40) (Yellow koji mold) protein is Serine/threonine-protein phosphatase 2A activator 1 (rrd1).